We begin with the raw amino-acid sequence, 98 residues long: Citrate lyase acyl carrier protein (98 aa).

An O-(phosphoribosyl dephospho-coenzyme A)serine modification is found at S14.

It belongs to the CitD family. Oligomer with a subunit composition of (alpha,beta,gamma)6.

It is found in the cytoplasm. Functionally, covalent carrier of the coenzyme of citrate lyase. The chain is Citrate lyase acyl carrier protein from Shigella boydii serotype 4 (strain Sb227).